The chain runs to 222 residues: uncharacterized protein (222 aa).

Helical transmembrane passes span 25 to 45, 80 to 100, 111 to 131, and 160 to 180; these read LLWLFFTLLGLGVFGIMPATA, LLGAVLALIGVIIYIDLALIY, FAIMIFGFLFVSMLFYVFPLL, and LALTVALFFLLAYLPGIVPFF.

The protein resides in the cell membrane. This is an uncharacterized protein from Bacillus subtilis (strain 168).